We begin with the raw amino-acid sequence, 944 residues long: 2-oxoglutarate dehydrogenase E1 component (944 aa).

The disordered stretch occupies residues 914 to 944; that stretch reads RRRRSSPAEGDPTVHKKEQERIVSDSLTRKN. Residues 925-936 show a composition bias toward basic and acidic residues; that stretch reads PTVHKKEQERIV.

Belongs to the alpha-ketoglutarate dehydrogenase family. Homodimer. Part of the 2-oxoglutarate dehydrogenase (OGDH) complex composed of E1 (2-oxoglutarate dehydrogenase), E2 (dihydrolipoamide succinyltransferase) and E3 (dihydrolipoamide dehydrogenase); the complex contains multiple copies of the three enzymatic components (E1, E2 and E3). The cofactor is thiamine diphosphate.

The catalysed reaction is N(6)-[(R)-lipoyl]-L-lysyl-[protein] + 2-oxoglutarate + H(+) = N(6)-[(R)-S(8)-succinyldihydrolipoyl]-L-lysyl-[protein] + CO2. Its function is as follows. E1 component of the 2-oxoglutarate dehydrogenase (OGDH) complex which catalyzes the decarboxylation of 2-oxoglutarate, the first step in the conversion of 2-oxoglutarate to succinyl-CoA and CO(2). The sequence is that of 2-oxoglutarate dehydrogenase E1 component from Bacillus licheniformis (strain ATCC 14580 / DSM 13 / JCM 2505 / CCUG 7422 / NBRC 12200 / NCIMB 9375 / NCTC 10341 / NRRL NRS-1264 / Gibson 46).